The primary structure comprises 567 residues: Berberine bridge enzyme-like D-1 (567 aa).

Residues 1 to 33 (MKRNISMFLQLLLIILMMISFLFTSLLVPSVSA) form the signal peptide. Cysteine 42 and cysteine 103 are oxidised to a cystine. Asparagine 50 carries N-linked (GlcNAc...) asparagine glycosylation. Residues 81–257 (SKPKPTVIIV…YAWKIRLLKV (177 aa)) form the FAD-binding PCMH-type domain. At histidine 118 the chain carries Pros-8alpha-FAD histidine. Asparagine 364 and asparagine 378 each carry an N-linked (GlcNAc...) asparagine glycan.

This sequence belongs to the oxygen-dependent FAD-linked oxidoreductase family. FAD is required as a cofactor. As to expression, mostly expressed in roots at low levels.

It is found in the vacuole. It functions in the pathway alkaloid biosynthesis; nicotine biosynthesis. Involved in the biosynthesis of pyridine alkaloid natural products, leading mainly to the production of anabasine, anatabine, nicotine and nornicotine, effective deterrents against herbivores with antiparasitic and pesticide properties (neurotoxins); nornicotine serves as the precursor in the synthesis of the carcinogen compound N'-nitrosonornicotine (NNN). Catalyzes a late oxidation step subsequent to the pyridine ring condensation reaction in the biosynthesis of alkaloids. The chain is Berberine bridge enzyme-like D-1 from Nicotiana tabacum (Common tobacco).